Reading from the N-terminus, the 320-residue chain is D-amino-acid oxidase (320 aa).

Ala-13, Gly-14, Val-15, Thr-42, Thr-43, Ser-44, Gly-48, and Ala-49 together coordinate FAD. Positions 220 and 274 each coordinate D-proline. Tyr-220 and Arg-274 together coordinate D-serine. Residues Arg-274, Gly-299, Gly-300, Gly-302, and Thr-304 each contribute to the FAD site. Gly-300 provides a ligand contact to D-proline. A D-serine-binding site is contributed by Gly-300.

It belongs to the DAMOX/DASOX family. FAD is required as a cofactor.

The protein localises to the cytoplasm. It localises to the secreted. It is found in the cell wall. It carries out the reaction a D-alpha-amino acid + O2 + H2O = a 2-oxocarboxylate + H2O2 + NH4(+). Catalyzes the oxidative deamination of D-amino acids with broad substrate specificity. Enables the organism to utilize D-amino acids as a source of nutrients. Enables the organism to utilize glycine as a carbon source. The chain is D-amino-acid oxidase from Mycobacterium tuberculosis (strain ATCC 25177 / H37Ra).